Consider the following 89-residue polypeptide: Small ribosomal subunit protein uS15 (89 aa).

It belongs to the universal ribosomal protein uS15 family. As to quaternary structure, part of the 30S ribosomal subunit. Forms a bridge to the 50S subunit in the 70S ribosome, contacting the 23S rRNA.

Functionally, one of the primary rRNA binding proteins, it binds directly to 16S rRNA where it helps nucleate assembly of the platform of the 30S subunit by binding and bridging several RNA helices of the 16S rRNA. Its function is as follows. Forms an intersubunit bridge (bridge B4) with the 23S rRNA of the 50S subunit in the ribosome. This is Small ribosomal subunit protein uS15 from Enterobacter sp. (strain 638).